We begin with the raw amino-acid sequence, 204 residues long: Guanylate kinase (204 aa).

Residues 1 to 182 (MLYIISAPSG…ALSDLNTIIC (182 aa)) form the Guanylate kinase-like domain. 7-14 (APSGTGKS) contacts ATP.

The protein belongs to the guanylate kinase family.

It localises to the cytoplasm. It carries out the reaction GMP + ATP = GDP + ADP. Essential for recycling GMP and indirectly, cGMP. This chain is Guanylate kinase, found in Baumannia cicadellinicola subsp. Homalodisca coagulata.